Reading from the N-terminus, the 103-residue chain is Large ribosomal subunit protein bL21 (103 aa).

Belongs to the bacterial ribosomal protein bL21 family. As to quaternary structure, part of the 50S ribosomal subunit. Contacts protein L20.

This protein binds to 23S rRNA in the presence of protein L20. This is Large ribosomal subunit protein bL21 from Ralstonia pickettii (strain 12J).